A 110-amino-acid chain; its full sequence is Guanine nucleotide-binding protein subunit gamma (110 aa).

Cys106 carries the S-palmitoyl cysteine lipid modification. Position 107 is a cysteine methyl ester (Cys107). Cys107 carries S-farnesyl cysteine lipidation. Positions 108-110 (TLM) are cleaved as a propeptide — removed in mature form.

This sequence belongs to the G protein gamma family. As to quaternary structure, g proteins are composed of 3 units, alpha, beta and gamma. The beta-gamma subunit complex (STE4-STE18 complex) interacts with PLP1 and PLP2.

It localises to the membrane. Implicated in the pheromone A- and alpha-factor response pathway. The beta and gamma chains of the putative yeast mating response pathway G protein play a positive role in initiation of the mating response. The chain is Guanine nucleotide-binding protein subunit gamma (STE18) from Saccharomyces cerevisiae (strain ATCC 204508 / S288c) (Baker's yeast).